Here is a 435-residue protein sequence, read N- to C-terminus: Tol-Pal system protein TolB (435 aa).

A signal peptide spans 1-28 (MTKCSFFRAILVAVGLMTAAVFATPANA). A disordered region spans residues 288–310 (STAAIDTSPSYSPDGARVSFESD).

This sequence belongs to the TolB family. In terms of assembly, the Tol-Pal system is composed of five core proteins: the inner membrane proteins TolA, TolQ and TolR, the periplasmic protein TolB and the outer membrane protein Pal. They form a network linking the inner and outer membranes and the peptidoglycan layer.

The protein localises to the periplasm. In terms of biological role, part of the Tol-Pal system, which plays a role in outer membrane invagination during cell division and is important for maintaining outer membrane integrity. The polypeptide is Tol-Pal system protein TolB (Rhizobium johnstonii (strain DSM 114642 / LMG 32736 / 3841) (Rhizobium leguminosarum bv. viciae)).